A 120-amino-acid polypeptide reads, in one-letter code: Chaperonin GroEL (120 aa).

23–27 (DGTTT) is a binding site for ATP.

It belongs to the chaperonin (HSP60) family. As to quaternary structure, forms a cylinder of 14 subunits composed of two heptameric rings stacked back-to-back. Interacts with the co-chaperonin GroES.

Its subcellular location is the cytoplasm. The enzyme catalyses ATP + H2O + a folded polypeptide = ADP + phosphate + an unfolded polypeptide.. Functionally, together with its co-chaperonin GroES, plays an essential role in assisting protein folding. The GroEL-GroES system forms a nano-cage that allows encapsulation of the non-native substrate proteins and provides a physical environment optimized to promote and accelerate protein folding. This chain is Chaperonin GroEL, found in Mycobacterium kansasii.